Here is a 443-residue protein sequence, read N- to C-terminus: Alpha-amylase (443 aa).

The N-terminal stretch at 1 to 24 (MHNTLFRTALLAAALGSFSHTASA) is a signal peptide. The substrate site is built by H114 and R196. D198 serves as the catalytic Nucleophile. 201–202 (KH) is a binding site for substrate. Catalysis depends on E223, which acts as the Proton donor. Substrate contacts are provided by G228 and H287.

The protein belongs to the glycosyl hydrolase 13 family.

The protein resides in the secreted. The catalysed reaction is Endohydrolysis of (1-&gt;4)-alpha-D-glucosidic linkages in polysaccharides containing three or more (1-&gt;4)-alpha-linked D-glucose units.. This is Alpha-amylase (amyA) from Aeromonas hydrophila.